The primary structure comprises 380 residues: Succinate--CoA ligase [ADP-forming] subunit beta (380 aa).

The ATP-grasp domain occupies 9–237 (RDLLARFGIP…PSAEPEAERR (229 aa)). ATP contacts are provided by residues K45, 52 to 54 (GRG), V94, and E99. Positions 192 and 206 each coordinate Mg(2+). Residues N257 and 314 to 316 (GIT) each bind substrate.

This sequence belongs to the succinate/malate CoA ligase beta subunit family. Heterotetramer of two alpha and two beta subunits. Mg(2+) serves as cofactor.

It catalyses the reaction succinate + ATP + CoA = succinyl-CoA + ADP + phosphate. The enzyme catalyses GTP + succinate + CoA = succinyl-CoA + GDP + phosphate. It functions in the pathway carbohydrate metabolism; tricarboxylic acid cycle; succinate from succinyl-CoA (ligase route): step 1/1. Its function is as follows. Succinyl-CoA synthetase functions in the citric acid cycle (TCA), coupling the hydrolysis of succinyl-CoA to the synthesis of either ATP or GTP and thus represents the only step of substrate-level phosphorylation in the TCA. The beta subunit provides nucleotide specificity of the enzyme and binds the substrate succinate, while the binding sites for coenzyme A and phosphate are found in the alpha subunit. This chain is Succinate--CoA ligase [ADP-forming] subunit beta, found in Chloroflexus aurantiacus (strain ATCC 29366 / DSM 635 / J-10-fl).